Consider the following 137-residue polypeptide: Large ribosomal subunit protein mL61 (137 aa).

The protein belongs to the mitochondrion-specific ribosomal protein mL61 family. As to quaternary structure, component of the mitochondrial large ribosomal subunit (mt-LSU). Mature yeast 74S mitochondrial ribosomes consist of a small (37S) and a large (54S) subunit. The 37S small subunit contains a 15S ribosomal RNA (15S mt-rRNA) and 34 different proteins. The 54S large subunit contains a 21S rRNA (21S mt-rRNA) and 46 different proteins.

The protein resides in the mitochondrion. Component of the mitochondrial ribosome (mitoribosome), a dedicated translation machinery responsible for the synthesis of mitochondrial genome-encoded proteins, including at least some of the essential transmembrane subunits of the mitochondrial respiratory chain. The mitoribosomes are attached to the mitochondrial inner membrane and translation products are cotranslationally integrated into the membrane. mL61 is not essential in cells grown at 30 degrees Celsius but is required for mitochondrial translation in cells grown at 18 degrees Celsius. The sequence is that of Large ribosomal subunit protein mL61 (MRP49) from Saccharomyces cerevisiae (strain ATCC 204508 / S288c) (Baker's yeast).